The primary structure comprises 476 residues: MNFETIIGLEVHVELKTNSKIFSPSTNEFGSDPNTNVNPIDLGYPGTLPVLNEEAVNFAMKAAMALNCEIATDTKFDRKNYFYPDNPKAYQISQFDQPIGENGWIEIEVNGEKKKIGITRLHLEEDAGKLTHGEDGYSYVDFNRQGTPLIEIVSEPDMRSPEEAYAYLEKLKNIIQYTGVSDVKMQEGSLRCDANISLRPIGQEEFGTKAELKNLNSFSYVQKGLEFEEKRQEKELLSGGEILQETRRYDEKTKETILMRVKEGSDDYRYFPEPDLVPLYIDEEWKERVRSEIPELPDARLERYINELGLSEYDANVLTASKQMSDFFEEATAEGADMKQVSNWLMGEVSAYMNKHYKELDELAITPEALAKMINLIEDGTISSKIAKKVFAELVENGGDPQKIVEEKGLVQISDPAQLKQIVNEVLDQNEQSIIDFKNGKNKAKGFLVGQIMKATKGQANPPLVNKILAEELNNR.

The protein belongs to the GatB/GatE family. GatB subfamily. As to quaternary structure, heterotrimer of A, B and C subunits.

The catalysed reaction is L-glutamyl-tRNA(Gln) + L-glutamine + ATP + H2O = L-glutaminyl-tRNA(Gln) + L-glutamate + ADP + phosphate + H(+). It carries out the reaction L-aspartyl-tRNA(Asn) + L-glutamine + ATP + H2O = L-asparaginyl-tRNA(Asn) + L-glutamate + ADP + phosphate + 2 H(+). Its function is as follows. Allows the formation of correctly charged Asn-tRNA(Asn) or Gln-tRNA(Gln) through the transamidation of misacylated Asp-tRNA(Asn) or Glu-tRNA(Gln) in organisms which lack either or both of asparaginyl-tRNA or glutaminyl-tRNA synthetases. The reaction takes place in the presence of glutamine and ATP through an activated phospho-Asp-tRNA(Asn) or phospho-Glu-tRNA(Gln). This is Aspartyl/glutamyl-tRNA(Asn/Gln) amidotransferase subunit B from Oceanobacillus iheyensis (strain DSM 14371 / CIP 107618 / JCM 11309 / KCTC 3954 / HTE831).